A 317-amino-acid chain; its full sequence is Large ribosomal subunit protein uL10 (317 aa).

Belongs to the universal ribosomal protein uL10 family. As to quaternary structure, P0 forms a pentameric complex by interaction with dimers of P1 and P2. In terms of processing, phosphorylated.

Its function is as follows. Ribosomal protein P0 is the functional equivalent of E.coli protein L10. The sequence is that of Large ribosomal subunit protein uL10 (rplp0) from Ictalurus punctatus (Channel catfish).